We begin with the raw amino-acid sequence, 343 residues long: Anthranilate phosphoribosyltransferase (343 aa).

Residues glycine 84, glycine 87–aspartate 88, threonine 92, asparagine 94–threonine 97, lysine 112–serine 120, and serine 124 each bind 5-phospho-alpha-D-ribose 1-diphosphate. An anthranilate-binding site is contributed by glycine 84. Position 96 (serine 96) interacts with Mg(2+). Asparagine 115 contributes to the anthranilate binding site. Position 170 (arginine 170) interacts with anthranilate. Mg(2+)-binding residues include aspartate 229 and glutamate 230.

It belongs to the anthranilate phosphoribosyltransferase family. Homodimer. It depends on Mg(2+) as a cofactor.

It catalyses the reaction N-(5-phospho-beta-D-ribosyl)anthranilate + diphosphate = 5-phospho-alpha-D-ribose 1-diphosphate + anthranilate. Its pathway is amino-acid biosynthesis; L-tryptophan biosynthesis; L-tryptophan from chorismate: step 2/5. Its function is as follows. Catalyzes the transfer of the phosphoribosyl group of 5-phosphorylribose-1-pyrophosphate (PRPP) to anthranilate to yield N-(5'-phosphoribosyl)-anthranilate (PRA). This chain is Anthranilate phosphoribosyltransferase, found in Stenotrophomonas maltophilia (strain K279a).